Consider the following 166-residue polypeptide: Desiccation-related protein At2g46140 (166 aa).

It belongs to the LEA type 2 family.

This is Desiccation-related protein At2g46140 from Arabidopsis thaliana (Mouse-ear cress).